Here is a 420-residue protein sequence, read N- to C-terminus: Protein BDLF2 (420 aa).

Disordered regions lie at residues 1 to 21 (MVDE…SREE) and 64 to 129 (AAAV…GGQR). Over 1–184 (MVDEQVAVEH…AETLAEPPRC (184 aa)) the chain is Intravirion. Over residues 90-108 (TKTNTQDQNQNQTTRTRTN) the composition is skewed to low complexity. A helical; Signal-anchor for type II membrane protein transmembrane segment spans residues 185–205 (FMLSFVFIYYCCYLAFLALLA). The Virion surface portion of the chain corresponds to 206-420 (FGFNPLFLPS…LEEVMYVMVQ (215 aa)). Residues asparagine 258, asparagine 264, asparagine 300, asparagine 304, asparagine 371, and asparagine 384 are each glycosylated (N-linked (GlcNAc...) asparagine; by host).

The protein belongs to the herpesviridae BDLF2 family. As to quaternary structure, interacts with BMRF2.

The protein resides in the virion membrane. Rearranges cellular actin to increase intercellular contacts and thereby promote virus cell-to-cell spreading. Induce the outgrowth of long, branched plasma membrane fronds to create intercellular network for virion traffic. The fronds are actin based and RhoA-dependent. This chain is Protein BDLF2, found in Homo sapiens (Human).